A 222-amino-acid polypeptide reads, in one-letter code: 4'-phosphopantetheinyl transferase Npt (222 aa).

Residues Asp105, Glu107, and Glu147 each coordinate Mg(2+).

This sequence belongs to the P-Pant transferase superfamily. In terms of assembly, monomer. The cofactor is Mg(2+).

The enzyme catalyses apo-[ACP] + CoA = holo-[ACP] + adenosine 3',5'-bisphosphate + H(+). Catalyzes the transfer of the 4'-phosphopantetheine moiety from coenzyme A to a serine residue in the acyl-carrier domain of carboxylic acid reductase Car, thus converting apo-Car to fully active holo-Car. Is probably also responsible for the activation of other proteins with phosphopantetheine attachment sites. The protein is 4'-phosphopantetheinyl transferase Npt (npt) of Nocardia iowensis.